A 168-amino-acid chain; its full sequence is Protein-export protein SecB (168 aa).

Residues 1–20 (MTDETAANGENEAGRQSQSS) are disordered.

Belongs to the SecB family. As to quaternary structure, homotetramer, a dimer of dimers. One homotetramer interacts with 1 SecA dimer.

The protein localises to the cytoplasm. Functionally, one of the proteins required for the normal export of preproteins out of the cell cytoplasm. It is a molecular chaperone that binds to a subset of precursor proteins, maintaining them in a translocation-competent state. It also specifically binds to its receptor SecA. In Rhodospirillum centenum (strain ATCC 51521 / SW), this protein is Protein-export protein SecB.